Here is a 134-residue protein sequence, read N- to C-terminus: 4-carboxymuconolactone decarboxylase (134 aa).

This sequence belongs to the carboxymuconolactone decarboxylase family.

It catalyses the reaction (R)-2-(carboxymethyl)-5-oxo-2,5-dihydro-2-furoate + H(+) = (4,5-dihydro-5-oxofuran-2-yl)-acetate + CO2. It functions in the pathway aromatic compound metabolism; beta-ketoadipate pathway; 5-oxo-4,5-dihydro-2-furylacetate from 3-carboxy-cis,cis-muconate: step 2/2. This Acinetobacter baylyi (strain ATCC 33305 / BD413 / ADP1) protein is 4-carboxymuconolactone decarboxylase (pcaC).